A 525-amino-acid chain; its full sequence is Cyclic AMP-responsive element-binding protein 3-like protein 2 (525 aa).

Residues 1-382 (MEIMESGDPV…SCKAAGTQTG (382 aa)) lie on the Cytoplasmic side of the membrane. Disordered stretches follow at residues 85 to 104 (LCGDSRPQSPFTHASSDDNF), 203 to 267 (EALQ…QGSG), and 309 to 338 (NKISAQESRRKKKEYMDSLEKRVENSSSEN). 2 stretches are compositionally biased toward polar residues: residues 90–102 (RPQSPFTHASSDD) and 213–239 (SSHGSDSEGGQSPTRSLPPSSPVQSQA). One can recognise a bZIP domain in the interval 299–362 (ALKKIRRKIK…RTLLQQLQRL (64 aa)). Residues 301–330 (KKIRRKIKNKISAQESRRKKKEYMDSLEKR) are basic motif. Basic and acidic residues predominate over residues 322 to 332 (EYMDSLEKRVE). The segment at 341-362 (LRKKVEVLESTNRTLLQQLQRL) is leucine-zipper. The chain crosses the membrane as a helical; Signal-anchor for type II membrane protein span at residues 383 to 403 (TCLMMVVLCFAVIFGSFTQNL). Residues 404–525 (DMYSSSSKTI…ELDRTVNTTS (122 aa)) are Lumenal-facing. An S1P recognition motif is present at residues 433–436 (RKLL). 3 N-linked (GlcNAc...) asparagine glycosylation sites follow: N490, N509, and N522.

It belongs to the bZIP family. ATF subfamily. In terms of assembly, binds DNA as a dimer. Post-translationally, upon ER stress, translocated to the Golgi apparatus, where it is processed by regulated intramembrane proteolysis (RIP) to release the cytosol-facing N-terminal transcription factor domain. The cleavage is performed sequentially by site-1 and site-2 proteases (S1P/mbtps1 and S2P/mbtps2).

It is found in the endoplasmic reticulum membrane. The protein localises to the nucleus. Functionally, transcription factor involved in unfolded protein response (UPR). In the absence of endoplasmic reticulum (ER) stress, inserted into ER membranes, with N-terminal DNA-binding and transcription activation domains oriented toward the cytosolic face of the membrane. In response to ER stress, transported to the Golgi, where it is cleaved in a site-specific manner by resident proteases S1P/mbtps1 and S2P/mbtps2. The released N-terminal cytosolic domain is translocated to the nucleus to effect transcription of specific target genes. Plays a critical role in chondrogenesis. May protect neuroblastoma cells from ER stress-induced death. In vitro activates transcription of target genes via direct binding to the CRE site. This chain is Cyclic AMP-responsive element-binding protein 3-like protein 2 (creb3l2), found in Xenopus laevis (African clawed frog).